Consider the following 585-residue polypeptide: Glutamine--tRNA ligase (585 aa).

Residues 51–61 (PEPNGYLHIGH) carry the 'HIGH' region motif. ATP is bound by residues 52-54 (EPN) and 58-64 (HIGHAKS). Positions 84 and 238 each coordinate L-glutamine. ATP-binding positions include Thr-257 and 292-293 (RL). Positions 299–303 (ITSKR) match the 'KMSKS' region motif.

The protein belongs to the class-I aminoacyl-tRNA synthetase family. In terms of assembly, monomer.

It is found in the cytoplasm. The catalysed reaction is tRNA(Gln) + L-glutamine + ATP = L-glutaminyl-tRNA(Gln) + AMP + diphosphate. This chain is Glutamine--tRNA ligase, found in Cupriavidus necator (strain ATCC 17699 / DSM 428 / KCTC 22496 / NCIMB 10442 / H16 / Stanier 337) (Ralstonia eutropha).